The following is a 251-amino-acid chain: Flap endonuclease Xni (251 aa).

Asp104 is a Mg(2+) binding site. A 5'-3' exonuclease domain is found at 160–249; it reads VQPQQLPDYW…IDGNLQQLRL (90 aa). Leu171, Ala172, Pro180, Val182, and Ile185 together coordinate K(+). The segment at 184-189 is interaction with DNA; it reads GIGPKS.

The protein belongs to the Xni family. Mg(2+) serves as cofactor. K(+) is required as a cofactor.

Functionally, has flap endonuclease activity. During DNA replication, flap endonucleases cleave the 5'-overhanging flap structure that is generated by displacement synthesis when DNA polymerase encounters the 5'-end of a downstream Okazaki fragment. The protein is Flap endonuclease Xni of Escherichia coli O6:K15:H31 (strain 536 / UPEC).